An 89-amino-acid polypeptide reads, in one-letter code: Small ribosomal subunit protein uS15 (89 aa).

It belongs to the universal ribosomal protein uS15 family. In terms of assembly, part of the 30S ribosomal subunit. Forms a bridge to the 50S subunit in the 70S ribosome, contacting the 23S rRNA.

Its function is as follows. One of the primary rRNA binding proteins, it binds directly to 16S rRNA where it helps nucleate assembly of the platform of the 30S subunit by binding and bridging several RNA helices of the 16S rRNA. Forms an intersubunit bridge (bridge B4) with the 23S rRNA of the 50S subunit in the ribosome. The protein is Small ribosomal subunit protein uS15 of Thermodesulfovibrio yellowstonii (strain ATCC 51303 / DSM 11347 / YP87).